Consider the following 396-residue polypeptide: Phosphopentomutase (396 aa).

The Mn(2+) site is built by aspartate 13, aspartate 288, histidine 293, aspartate 329, histidine 330, and histidine 341.

Belongs to the phosphopentomutase family. Requires Mn(2+) as cofactor.

Its subcellular location is the cytoplasm. The enzyme catalyses 2-deoxy-alpha-D-ribose 1-phosphate = 2-deoxy-D-ribose 5-phosphate. It catalyses the reaction alpha-D-ribose 1-phosphate = D-ribose 5-phosphate. The protein operates within carbohydrate degradation; 2-deoxy-D-ribose 1-phosphate degradation; D-glyceraldehyde 3-phosphate and acetaldehyde from 2-deoxy-alpha-D-ribose 1-phosphate: step 1/2. Its function is as follows. Isomerase that catalyzes the conversion of deoxy-ribose 1-phosphate (dRib-1-P) and ribose 1-phosphate (Rib-1-P) to deoxy-ribose 5-phosphate (dRib-5-P) and ribose 5-phosphate (Rib-5-P), respectively. This chain is Phosphopentomutase, found in Clostridium perfringens (strain ATCC 13124 / DSM 756 / JCM 1290 / NCIMB 6125 / NCTC 8237 / Type A).